A 253-amino-acid chain; its full sequence is 5'-nucleotidase SurE (253 aa).

Positions 8, 9, 40, and 97 each coordinate a divalent metal cation.

The protein belongs to the SurE nucleotidase family. A divalent metal cation is required as a cofactor.

The protein localises to the cytoplasm. The enzyme catalyses a ribonucleoside 5'-phosphate + H2O = a ribonucleoside + phosphate. Its function is as follows. Nucleotidase that shows phosphatase activity on nucleoside 5'-monophosphates. This Desulforamulus reducens (strain ATCC BAA-1160 / DSM 100696 / MI-1) (Desulfotomaculum reducens) protein is 5'-nucleotidase SurE.